A 354-amino-acid chain; its full sequence is Ferredoxin--NADP reductase 2 (354 aa).

Positions 14, 33, 41, 46, 86, 121, 289, and 330 each coordinate FAD.

The protein belongs to the ferredoxin--NADP reductase type 2 family. As to quaternary structure, homodimer. It depends on FAD as a cofactor.

It carries out the reaction 2 reduced [2Fe-2S]-[ferredoxin] + NADP(+) + H(+) = 2 oxidized [2Fe-2S]-[ferredoxin] + NADPH. The sequence is that of Ferredoxin--NADP reductase 2 from Christiangramia forsetii (strain DSM 17595 / CGMCC 1.15422 / KT0803) (Gramella forsetii).